Consider the following 141-residue polypeptide: UPF0310 protein SSA_0254 (141 aa).

Belongs to the UPF0310 family.

The sequence is that of UPF0310 protein SSA_0254 from Streptococcus sanguinis (strain SK36).